Consider the following 140-residue polypeptide: ATP synthase epsilon chain (140 aa).

This sequence belongs to the ATPase epsilon chain family. In terms of assembly, F-type ATPases have 2 components, CF(1) - the catalytic core - and CF(0) - the membrane proton channel. CF(1) has five subunits: alpha(3), beta(3), gamma(1), delta(1), epsilon(1). CF(0) has three main subunits: a, b and c.

It is found in the cell inner membrane. Functionally, produces ATP from ADP in the presence of a proton gradient across the membrane. The protein is ATP synthase epsilon chain of Thermodesulfovibrio yellowstonii (strain ATCC 51303 / DSM 11347 / YP87).